We begin with the raw amino-acid sequence, 387 residues long: Testis-expressed protein 9 (387 aa).

Disordered stretches follow at residues 1 to 25 (MAGRSVRVPRRGSAGTQSRGQLAAG) and 58 to 133 (REQQ…LKYP). Polar residues-rich tracts occupy residues 70–91 (ALTTSCKEEGGSSSRDLLSSEG) and 103–115 (KNTGPVNKIQNRL). A coiled-coil region spans residues 184–347 (IGTEAQIRFL…ERQKGELMIG (164 aa)).

In terms of tissue distribution, testis-specific.

The protein resides in the cytoplasm. It localises to the cytoskeleton. It is found in the microtubule organizing center. Its subcellular location is the centrosome. The protein localises to the centriolar satellite. The sequence is that of Testis-expressed protein 9 (Tex9) from Mus musculus (Mouse).